The chain runs to 555 residues: Protein tyrosine phosphatase-like protein egg-3 (555 aa).

Short sequence motifs (D-box) lie at residues 96–99 and 130–133; these read RILL and RDRL. Residues 207–514 enclose the Tyrosine-protein phosphatase domain; the sequence is FVQEFNRLDR…LFIYRVILRW (308 aa). The RXXL motif; required for cortical localization signature appears at 253–256; that stretch reads RVKL. The RXXL motif signature appears at 266 to 269; that stretch reads RNEL. 2 short sequence motifs (RXXL motif; required for cortical localization) span residues 509-512 and 525-528; these read RVIL and RAAL.

It belongs to the protein-tyrosine phosphatase family. Part of a complex, consisting of pseudophosphatases egg-3, egg-4, egg-5 and kinase mbk-2; this complex is required for the oocyte-to-zygote transition. Interacts (via tyrosine-protein phosphatase domain) with kinase mbk-2 (via N-terminus); the interaction does not affect mbk-2 kinase activity, is enhanced by mbk-2 tyrosine phosphorylation status and requires prior binding of mbk-2 to egg-4 and egg-5. Interacts with egg-4.

It localises to the cytoplasm. The protein localises to the cell cortex. Its function is as follows. Probable pseudophosphatase required for the oocyte-to-zygote transition during which it regulates the polarized dispersal of the cortical actin cytoskeleton, the synthesis of the eggshell chitin layer and the formation of the polar bodies after meiosis I and II. Acts as a scaffold to tether kinase mbk-2 and pseudophosphatases egg-4 and egg-5 to the oocyte cortex and thus restricts mbk-2 activity to the cortex during meiosis I. Regulates mbk-2 localization to cytoplasmic foci during meiosis II. Also required for chitin synthase chs-1 localization to the cell cortex of unfertilized oocytes and to cytoplasmic foci in the fertilized embryo. This is Protein tyrosine phosphatase-like protein egg-3 from Caenorhabditis elegans.